Consider the following 84-residue polypeptide: uncharacterized protein (84 aa).

Residues 5-31 (KIQEIINELDNLMNRERKYIELVATVE) are a coiled coil.

This is an uncharacterized protein from Methanocaldococcus jannaschii (strain ATCC 43067 / DSM 2661 / JAL-1 / JCM 10045 / NBRC 100440) (Methanococcus jannaschii).